Reading from the N-terminus, the 456-residue chain is Gamma-glutamyl phosphate reductase (456 aa).

It belongs to the gamma-glutamyl phosphate reductase family.

The protein resides in the cytoplasm. It carries out the reaction L-glutamate 5-semialdehyde + phosphate + NADP(+) = L-glutamyl 5-phosphate + NADPH + H(+). The protein operates within amino-acid biosynthesis; L-proline biosynthesis; L-glutamate 5-semialdehyde from L-glutamate: step 2/2. In terms of biological role, catalyzes the NADPH-dependent reduction of L-glutamate 5-phosphate into L-glutamate 5-semialdehyde and phosphate. The product spontaneously undergoes cyclization to form 1-pyrroline-5-carboxylate. The polypeptide is Gamma-glutamyl phosphate reductase (Haloquadratum walsbyi (strain DSM 16790 / HBSQ001)).